Reading from the N-terminus, the 257-residue chain is Ribonuclease HII (257 aa).

In terms of domain architecture, RNase H type-2 spans 71–257; it reads ELIAGIDEVG…EPIKSMVNFK (187 aa). The a divalent metal cation site is built by Asp-77, Glu-78, and Asp-169.

It belongs to the RNase HII family. It depends on Mn(2+) as a cofactor. Mg(2+) serves as cofactor.

The protein localises to the cytoplasm. It carries out the reaction Endonucleolytic cleavage to 5'-phosphomonoester.. Endonuclease that specifically degrades the RNA of RNA-DNA hybrids. The chain is Ribonuclease HII (rnhB) from Lactococcus lactis subsp. cremoris (strain MG1363).